Here is a 1576-residue protein sequence, read N- to C-terminus: DNA-directed RNA polymerase subunit beta' (1576 aa).

Cysteine 64, cysteine 66, cysteine 79, and cysteine 82 together coordinate Zn(2+). Residues aspartate 590, aspartate 592, and aspartate 594 each contribute to the Mg(2+) site. Cysteine 928, cysteine 1002, cysteine 1009, and cysteine 1012 together coordinate Zn(2+).

It belongs to the RNA polymerase beta' chain family. The RNAP catalytic core consists of 2 alpha, 1 beta, 1 beta' and 1 omega subunit. When a sigma factor is associated with the core the holoenzyme is formed, which can initiate transcription. It depends on Mg(2+) as a cofactor. Requires Zn(2+) as cofactor.

The enzyme catalyses RNA(n) + a ribonucleoside 5'-triphosphate = RNA(n+1) + diphosphate. Functionally, DNA-dependent RNA polymerase catalyzes the transcription of DNA into RNA using the four ribonucleoside triphosphates as substrates. The polypeptide is DNA-directed RNA polymerase subunit beta' (Aquifex pyrophilus).